The chain runs to 237 residues: Ribonuclease PH (237 aa).

Residues arginine 86 and 124–126 (GTR) each bind phosphate.

The protein belongs to the RNase PH family. Homohexameric ring arranged as a trimer of dimers.

It carries out the reaction tRNA(n+1) + phosphate = tRNA(n) + a ribonucleoside 5'-diphosphate. Its function is as follows. Phosphorolytic 3'-5' exoribonuclease that plays an important role in tRNA 3'-end maturation. Removes nucleotide residues following the 3'-CCA terminus of tRNAs; can also add nucleotides to the ends of RNA molecules by using nucleoside diphosphates as substrates, but this may not be physiologically important. Probably plays a role in initiation of 16S rRNA degradation (leading to ribosome degradation) during starvation. The protein is Ribonuclease PH of Xanthobacter autotrophicus (strain ATCC BAA-1158 / Py2).